A 221-amino-acid chain; its full sequence is Deoxyribose-phosphate aldolase (221 aa).

Catalysis depends on Asp-90, which acts as the Proton donor/acceptor. Lys-152 serves as the catalytic Schiff-base intermediate with acetaldehyde. The active-site Proton donor/acceptor is the Lys-181.

Belongs to the DeoC/FbaB aldolase family. DeoC type 1 subfamily.

Its subcellular location is the cytoplasm. The enzyme catalyses 2-deoxy-D-ribose 5-phosphate = D-glyceraldehyde 3-phosphate + acetaldehyde. It functions in the pathway carbohydrate degradation; 2-deoxy-D-ribose 1-phosphate degradation; D-glyceraldehyde 3-phosphate and acetaldehyde from 2-deoxy-alpha-D-ribose 1-phosphate: step 2/2. Its function is as follows. Catalyzes a reversible aldol reaction between acetaldehyde and D-glyceraldehyde 3-phosphate to generate 2-deoxy-D-ribose 5-phosphate. The polypeptide is Deoxyribose-phosphate aldolase (Exiguobacterium sibiricum (strain DSM 17290 / CCUG 55495 / CIP 109462 / JCM 13490 / 255-15)).